Consider the following 390-residue polypeptide: Ribosomal RNA large subunit methyltransferase G (390 aa).

This sequence belongs to the methyltransferase superfamily. RlmG family.

It is found in the cytoplasm. It catalyses the reaction guanosine(1835) in 23S rRNA + S-adenosyl-L-methionine = N(2)-methylguanosine(1835) in 23S rRNA + S-adenosyl-L-homocysteine + H(+). Functionally, specifically methylates the guanine in position 1835 (m2G1835) of 23S rRNA. The polypeptide is Ribosomal RNA large subunit methyltransferase G (Alcanivorax borkumensis (strain ATCC 700651 / DSM 11573 / NCIMB 13689 / SK2)).